The primary structure comprises 317 residues: MPVQGSQRRLLGSLNSTPTATPRLGLAANQTGARCLEVSIPDGLFLSLGLVSLVENVLVVVAIARNRNLHSPMYCFICCLALSDLLVSGSNMLETAVFLLLEAGALAARAAVVQQLDNVIDVITCSSMLSSLCFLGAIAVDRYISIFYALRYHSIVTLRRARRVVAAIWVASVLFSTLFIAYCDHAAVLLCLVVFFLAMLVLMAVLYVHMLARACQHAQGIAQLHKRQRPAHQGVGLKGAATLTILLGIFFLCWGPFFLHLTLIVLCPQHPTCSCIFKNFNLFLTLIICNAIIDPLIYAFRSQELRRTLKKVLLCSW.

The Extracellular segment spans residues 1–37 (MPVQGSQRRLLGSLNSTPTATPRLGLAANQTGARCLE). N-linked (GlcNAc...) asparagine glycosylation is present at asparagine 29. The chain crosses the membrane as a helical span at residues 38–63 (VSIPDGLFLSLGLVSLVENVLVVVAI). Residues 64–72 (ARNRNLHSP) lie on the Cytoplasmic side of the membrane. Residues 73–93 (MYCFICCLALSDLLVSGSNML) traverse the membrane as a helical segment. At 94 to 118 (ETAVFLLLEAGALAARAAVVQQLDN) the chain is on the extracellular side. A helical membrane pass occupies residues 119–140 (VIDVITCSSMLSSLCFLGAIAV). The Cytoplasmic portion of the chain corresponds to 141 to 163 (DRYISIFYALRYHSIVTLRRARR). The chain crosses the membrane as a helical span at residues 164–183 (VVAAIWVASVLFSTLFIAYC). Topologically, residues 184–191 (DHAAVLLC) are extracellular. A helical transmembrane segment spans residues 192 to 211 (LVVFFLAMLVLMAVLYVHML). Residues 212-240 (ARACQHAQGIAQLHKRQRPAHQGVGLKGA) lie on the Cytoplasmic side of the membrane. The helical transmembrane segment at 241-266 (ATLTILLGIFFLCWGPFFLHLTLIVL) threads the bilayer. The Extracellular segment spans residues 267 to 279 (CPQHPTCSCIFKN). A helical membrane pass occupies residues 280–300 (FNLFLTLIICNAIIDPLIYAF). At 301–317 (RSQELRRTLKKVLLCSW) the chain is on the cytoplasmic side. The S-palmitoyl cysteine moiety is linked to residue cysteine 315.

Belongs to the G-protein coupled receptor 1 family. In terms of assembly, interacts with MGRN1, but does not undergo MGRN1-mediated ubiquitination; this interaction competes with GNAS-binding and thus inhibits agonist-induced cAMP production. Interacts with OPN3; the interaction results in a decrease in MC1R-mediated cAMP signaling and ultimately a decrease in melanin production in melanocytes.

It localises to the cell membrane. In terms of biological role, receptor for MSH (alpha, beta and gamma) and ACTH. The activity of this receptor is mediated by G proteins which activate adenylate cyclase. Mediates melanogenesis, the production of eumelanin (black/brown) and phaeomelanin (red/yellow), via regulation of cAMP signaling in melanocytes. The polypeptide is Melanocyte-stimulating hormone receptor (MC1R) (Trachypithecus obscurus (Dusky leaf-monkey)).